Reading from the N-terminus, the 571-residue chain is Wee1-like protein kinase 1-A (571 aa).

Positions 1-101 are disordered; that stretch reads MSLQPVPHRL…PDCPGTPPHK (101 aa). Residues 81–98 are compositionally biased toward pro residues; sequence PASPPGPAASPPDCPGTP. A Protein kinase domain is found at 224 to 494; the sequence is FHELEKIGSG…SMALVKHSVL (271 aa). ATP is bound by residues 230–238 and lysine 253; that span reads IGSGEFGSV. The active-site Proton acceptor is the aspartate 351. Mg(2+)-binding residues include asparagine 356 and aspartate 388. The stretch at 500–539 forms a coiled coil; it reads KNAEQLRIELNAEKFKNALLQKELKKAQIAKAAAEERALF.

Belongs to the protein kinase superfamily. Ser/Thr protein kinase family. WEE1 subfamily. As to expression, zygotically expressed. Expressed in regions of the embryo that are devoid of mitotic cells, such as the involuting mesoderm.

Its subcellular location is the nucleus. The catalysed reaction is L-tyrosyl-[protein] + ATP = O-phospho-L-tyrosyl-[protein] + ADP + H(+). Functionally, acts as a zygotic negative regulator of entry into mitosis (G2 to M transition) by protecting the nucleus from cytoplasmically activated cyclin B1-complexed cdk1 before the onset of mitosis by mediating phosphorylation of cdk1 on 'Tyr-15'. Specifically phosphorylates and inactivates cyclin B1-complexed cdk1 reaching a maximum during G2 phase and a minimum as cells enter M phase. Phosphorylation of cyclin B1-cdk1 occurs exclusively on 'Tyr-15' and phosphorylation of monomeric cdk1 does not occur. Involved in convergent extension of the paraxial mesoderm during neurulation by inhibiting the cell cycle. The sequence is that of Wee1-like protein kinase 1-A (wee1-a) from Xenopus laevis (African clawed frog).